The following is a 241-amino-acid chain: DnaA regulatory inactivator Hda (241 aa).

Belongs to the DnaA family. HdA subfamily. In terms of assembly, the active form seems to be an ADP-bound monomer. Forms the RIDA complex (regulatory inactivation of DnaA) of ATP-DnaA, ADP-Hda and the DNA-loaded beta sliding clamp (dnaN).

In terms of biological role, mediates the interaction of DNA replication initiator protein DnaA with DNA polymerase subunit beta sliding clamp (dnaN). Stimulates hydrolysis of ATP-DnaA to ADP-DnaA, rendering DnaA inactive for reinitiation, a process called regulatory inhibition of DnaA or RIDA. In Salmonella arizonae (strain ATCC BAA-731 / CDC346-86 / RSK2980), this protein is DnaA regulatory inactivator Hda.